The chain runs to 309 residues: Porphobilinogen deaminase (309 aa).

An S-(dipyrrolylmethanemethyl)cysteine modification is found at cysteine 241.

It belongs to the HMBS family. In terms of assembly, monomer. It depends on dipyrromethane as a cofactor.

The enzyme catalyses 4 porphobilinogen + H2O = hydroxymethylbilane + 4 NH4(+). The protein operates within porphyrin-containing compound metabolism; protoporphyrin-IX biosynthesis; coproporphyrinogen-III from 5-aminolevulinate: step 2/4. Its function is as follows. Tetrapolymerization of the monopyrrole PBG into the hydroxymethylbilane pre-uroporphyrinogen in several discrete steps. The chain is Porphobilinogen deaminase from Bacillus cereus (strain ZK / E33L).